The following is a 73-amino-acid chain: RNA-binding protein Hfq (73 aa).

The 61-residue stretch at 8–68 (DQFLNQIRKE…ISTFAPQKNV (61 aa)) folds into the Sm domain.

This sequence belongs to the Hfq family. In terms of assembly, homohexamer.

Functionally, RNA chaperone that binds small regulatory RNA (sRNAs) and mRNAs to facilitate mRNA translational regulation in response to envelope stress, environmental stress and changes in metabolite concentrations. Also binds with high specificity to tRNAs. The chain is RNA-binding protein Hfq from Bacillus subtilis (strain 168).